The sequence spans 386 residues: Succinate--CoA ligase [ADP-forming] subunit beta (386 aa).

The 236-residue stretch at 9 to 244 (KEILHKFNVP…YDEEVKEEIE (236 aa)) folds into the ATP-grasp domain. ATP is bound by residues Lys46, 53-55 (GRG), Glu99, Ser102, and Glu107. 2 residues coordinate Mg(2+): Asn199 and Asp213. Substrate is bound by residues Asn264 and 321-323 (GIM).

This sequence belongs to the succinate/malate CoA ligase beta subunit family. In terms of assembly, heterotetramer of two alpha and two beta subunits. Mg(2+) serves as cofactor.

The catalysed reaction is succinate + ATP + CoA = succinyl-CoA + ADP + phosphate. It catalyses the reaction GTP + succinate + CoA = succinyl-CoA + GDP + phosphate. It functions in the pathway carbohydrate metabolism; tricarboxylic acid cycle; succinate from succinyl-CoA (ligase route): step 1/1. Functionally, succinyl-CoA synthetase functions in the citric acid cycle (TCA), coupling the hydrolysis of succinyl-CoA to the synthesis of either ATP or GTP and thus represents the only step of substrate-level phosphorylation in the TCA. The beta subunit provides nucleotide specificity of the enzyme and binds the substrate succinate, while the binding sites for coenzyme A and phosphate are found in the alpha subunit. The chain is Succinate--CoA ligase [ADP-forming] subunit beta from Wolbachia pipientis subsp. Culex pipiens (strain wPip).